Consider the following 371-residue polypeptide: Cytochrome b (371 aa).

4 helical membrane-spanning segments follow: residues 25–45 (FGSM…FLAI), 69–90 (WIMQ…YTHI), 105–125 (WLSG…GYVL), and 170–190 (FFAL…IHII). Heme b-binding residues include His-75 and His-89. Heme b is bound by residues His-174 and His-188. His-193 is an a ubiquinone binding site. The next 4 membrane-spanning stretches (helical) occupy residues 218–238 (YKDT…LSFT), 280–300 (LGGT…PFTH), 312–332 (LAQT…WTAS), and 339–358 (FIII…IMNP).

The protein belongs to the cytochrome b family. The cytochrome bc1 complex contains 3 respiratory subunits (MT-CYB, CYC1 and UQCRFS1), 2 core proteins (UQCRC1 and UQCRC2) and probably 6 low-molecular weight proteins. Requires heme b as cofactor.

It is found in the mitochondrion inner membrane. Functionally, component of the ubiquinol-cytochrome c reductase complex (complex III or cytochrome b-c1 complex) that is part of the mitochondrial respiratory chain. The b-c1 complex mediates electron transfer from ubiquinol to cytochrome c. Contributes to the generation of a proton gradient across the mitochondrial membrane that is then used for ATP synthesis. The protein is Cytochrome b (MT-CYB) of Sinomicrurus macclellandi (Macclelland's coral snake).